Reading from the N-terminus, the 298-residue chain is tRNA-cytidine(32) 2-sulfurtransferase (298 aa).

Positions S48 to S53 match the PP-loop motif motif. Residues C123, C126, and C214 each contribute to the [4Fe-4S] cluster site.

It belongs to the TtcA family. In terms of assembly, homodimer. Mg(2+) is required as a cofactor. It depends on [4Fe-4S] cluster as a cofactor.

Its subcellular location is the cytoplasm. The enzyme catalyses cytidine(32) in tRNA + S-sulfanyl-L-cysteinyl-[cysteine desulfurase] + AH2 + ATP = 2-thiocytidine(32) in tRNA + L-cysteinyl-[cysteine desulfurase] + A + AMP + diphosphate + H(+). Its pathway is tRNA modification. Its function is as follows. Catalyzes the ATP-dependent 2-thiolation of cytidine in position 32 of tRNA, to form 2-thiocytidine (s(2)C32). The sulfur atoms are provided by the cysteine/cysteine desulfurase (IscS) system. The chain is tRNA-cytidine(32) 2-sulfurtransferase from Nitrosospira multiformis (strain ATCC 25196 / NCIMB 11849 / C 71).